Reading from the N-terminus, the 229-residue chain is Large ribosomal subunit protein uL1 (229 aa).

Belongs to the universal ribosomal protein uL1 family. Part of the 50S ribosomal subunit.

Binds directly to 23S rRNA. The L1 stalk is quite mobile in the ribosome, and is involved in E site tRNA release. In terms of biological role, protein L1 is also a translational repressor protein, it controls the translation of the L11 operon by binding to its mRNA. The chain is Large ribosomal subunit protein uL1 from Streptococcus pneumoniae (strain JJA).